The sequence spans 171 residues: Crossover junction endodeoxyribonuclease RuvC (171 aa).

Residues aspartate 7, glutamate 66, and aspartate 138 contribute to the active site. 3 residues coordinate Mg(2+): aspartate 7, glutamate 66, and aspartate 138.

The protein belongs to the RuvC family. As to quaternary structure, homodimer which binds Holliday junction (HJ) DNA. The HJ becomes 2-fold symmetrical on binding to RuvC with unstacked arms; it has a different conformation from HJ DNA in complex with RuvA. In the full resolvosome a probable DNA-RuvA(4)-RuvB(12)-RuvC(2) complex forms which resolves the HJ. Mg(2+) is required as a cofactor.

Its subcellular location is the cytoplasm. The enzyme catalyses Endonucleolytic cleavage at a junction such as a reciprocal single-stranded crossover between two homologous DNA duplexes (Holliday junction).. Functionally, the RuvA-RuvB-RuvC complex processes Holliday junction (HJ) DNA during genetic recombination and DNA repair. Endonuclease that resolves HJ intermediates. Cleaves cruciform DNA by making single-stranded nicks across the HJ at symmetrical positions within the homologous arms, yielding a 5'-phosphate and a 3'-hydroxyl group; requires a central core of homology in the junction. The consensus cleavage sequence is 5'-(A/T)TT(C/G)-3'. Cleavage occurs on the 3'-side of the TT dinucleotide at the point of strand exchange. HJ branch migration catalyzed by RuvA-RuvB allows RuvC to scan DNA until it finds its consensus sequence, where it cleaves and resolves the cruciform DNA. The protein is Crossover junction endodeoxyribonuclease RuvC of Francisella tularensis subsp. mediasiatica (strain FSC147).